Consider the following 183-residue polypeptide: Large ribosomal subunit protein uL5 (183 aa).

It belongs to the universal ribosomal protein uL5 family. Part of the 50S ribosomal subunit; part of the 5S rRNA/L5/L18/L25 subcomplex. Contacts the 5S rRNA and the P site tRNA. Forms a bridge to the 30S subunit in the 70S ribosome.

In terms of biological role, this is one of the proteins that bind and probably mediate the attachment of the 5S RNA into the large ribosomal subunit, where it forms part of the central protuberance. In the 70S ribosome it contacts protein S13 of the 30S subunit (bridge B1b), connecting the 2 subunits; this bridge is implicated in subunit movement. Contacts the P site tRNA; the 5S rRNA and some of its associated proteins might help stabilize positioning of ribosome-bound tRNAs. In Leptospira biflexa serovar Patoc (strain Patoc 1 / Ames), this protein is Large ribosomal subunit protein uL5.